We begin with the raw amino-acid sequence, 151 residues long: Cysteine protease inhibitor 5 (151 aa).

Disulfide bonds link Cys13–Cys65 and Cys114–Cys120.

Belongs to the protease inhibitor I3 (leguminous Kunitz-type inhibitor) family.

Its subcellular location is the vacuole. In terms of biological role, inhibitor of cysteine proteases. May protect the plant by inhibiting proteases of invading organisms. The sequence is that of Cysteine protease inhibitor 5 from Solanum tuberosum (Potato).